Consider the following 130-residue polypeptide: MKFRKGRPKIPRLISEEPQFKLFKPAGTPGIELESEVLTFEELESLRLVDYLNQPHEEAADAMGISRRVFWNILKSARKKVADALINGKMIDIGGGYYKIRECNYEDECQRGRNCRYGVSNCLTLKKDSE.

It belongs to the UPF0251 family.

This chain is UPF0251 protein MmarC6_0272, found in Methanococcus maripaludis (strain C6 / ATCC BAA-1332).